A 200-amino-acid polypeptide reads, in one-letter code: NAD(P)H-dependent FMN reductase C4B3.06c (200 aa).

Residues R22, 96–99 (QYNG), and Y126 each bind FMN.

In terms of assembly, homodimer.

The protein resides in the cytoplasm. Its subcellular location is the nucleus. The catalysed reaction is FMNH2 + NADP(+) = FMN + NADPH + 2 H(+). It carries out the reaction FMNH2 + NAD(+) = FMN + NADH + 2 H(+). In terms of biological role, has several reductase activities that are NAD(P)H-dependent and involve FMN as a cofactor. May be involved in ferric iron assimilation. The sequence is that of NAD(P)H-dependent FMN reductase C4B3.06c from Schizosaccharomyces pombe (strain 972 / ATCC 24843) (Fission yeast).